Consider the following 227-residue polypeptide: PKHD-type hydroxylase Bphyt_7102 (227 aa).

The Fe2OG dioxygenase domain occupies 80-179 (QVYPPLFNRY…RIASFFWVQS (100 aa)). Residues His98, Asp100, and His160 each coordinate Fe cation. A 2-oxoglutarate-binding site is contributed by Arg170.

Requires Fe(2+) as cofactor. L-ascorbate is required as a cofactor.

The protein is PKHD-type hydroxylase Bphyt_7102 of Paraburkholderia phytofirmans (strain DSM 17436 / LMG 22146 / PsJN) (Burkholderia phytofirmans).